A 1207-amino-acid chain; its full sequence is DNA-directed RNA polymerase subunit beta' (1207 aa).

Cys60, Cys62, Cys75, and Cys78 together coordinate Zn(2+). Mg(2+) contacts are provided by Asp450, Asp452, and Asp454. The Zn(2+) site is built by Cys818, Cys892, Cys899, and Cys902.

This sequence belongs to the RNA polymerase beta' chain family. The RNAP catalytic core consists of 2 alpha, 1 beta, 1 beta' and 1 omega subunit. When a sigma factor is associated with the core the holoenzyme is formed, which can initiate transcription. Requires Mg(2+) as cofactor. Zn(2+) is required as a cofactor.

The catalysed reaction is RNA(n) + a ribonucleoside 5'-triphosphate = RNA(n+1) + diphosphate. DNA-dependent RNA polymerase catalyzes the transcription of DNA into RNA using the four ribonucleoside triphosphates as substrates. This chain is DNA-directed RNA polymerase subunit beta', found in Lactococcus lactis subsp. lactis (strain IL1403) (Streptococcus lactis).